The chain runs to 949 residues: Insulin receptor substrate 1 (949 aa).

The PH domain maps to 8–109 (GMALSGYLKK…WLDKLLVLQR (102 aa)). The region spanning 122-236 (YDQVWQVVIQ…SAMSAKTESN (115 aa)) is the IRS-type PTB domain. Residues 247 to 270 (PDLSHEPMRKRSSSANEASKPINV) form a disordered region. Residues S286, S287, and S342 each carry the phosphoserine modification. The span at 304–345 (RNGTLSESSNQTYFGSNHGLRSNTISGNRPHSTNKHSNSPTF) shows a compositional bias: polar residues. Residues 304-373 (RNGTLSESSN…SDDNGSYSHY (70 aa)) form a disordered region. Y410 is modified (phosphotyrosine; by INSR). The YXXM motif 1 signature appears at 410–413 (YIPM). The interval 530–556 (RSQSSITKEGSGYGTSGNRQKKSTSAP) is disordered. S554 is modified (phosphoserine). Residues 640-643 (YLEM) carry the YXXM motif 2 motif. Basic and acidic residues predominate over residues 696-706 (REQTTSEEKKS). The tract at residues 696–718 (REQTTSEEKKSNSPLNEKPFSLK) is disordered. Y892 bears the Phosphotyrosine; by INSR mark. Positions 906 to 949 (AKYLKRGSRESPPVSACPEDGNTYAKIDFDQSDSSSSSSNIFNT) are disordered. Phosphoserine occurs at positions 913 and 916. At Y929 the chain carries Phosphotyrosine; by INSR. Over residues 937-949 (SDSSSSSSNIFNT) the composition is skewed to low complexity.

In terms of assembly, bindings to phosphatidylinositol 3-kinase and SHP2.

In terms of biological role, activates phosphatidylinositol 3-kinase when bound to the regulatory p85 subunit. May mediate the control of various cellular processes by insulin-like peptides. When phosphorylated by the insulin receptor binds specifically to various cellular proteins containing SH2 domains. Involved in control of cell proliferation, cell size, and body and organ growth throughout development. Also has a role in a signaling pathway controlling the physiological response required to endure periods of low nutrient conditions. Insulin/insulin-like growth factor (IGF) signaling pathway has a role in regulating aging and is necessary in the ovary for vitellogenic maturation. The sequence is that of Insulin receptor substrate 1 from Drosophila yakuba (Fruit fly).